The chain runs to 71 residues: Beta-defensin 124 (71 aa).

The first 22 residues, 1–22 (MTQLLLFLVALLVLGHVPSGRS), serve as a signal peptide directing secretion. 3 disulfides stabilise this stretch: C27/C54, C34/C48, and C38/C55.

It belongs to the beta-defensin family.

Its subcellular location is the secreted. Has antibacterial activity. This chain is Beta-defensin 124 (DEFB124), found in Homo sapiens (Human).